The chain runs to 241 residues: Demethylmenaquinone methyltransferase (241 aa).

Residues Thr-60, Asp-81, and Asp-106–Ala-107 contribute to the S-adenosyl-L-methionine site.

Belongs to the class I-like SAM-binding methyltransferase superfamily. MenG/UbiE family.

The enzyme catalyses a 2-demethylmenaquinol + S-adenosyl-L-methionine = a menaquinol + S-adenosyl-L-homocysteine + H(+). It functions in the pathway quinol/quinone metabolism; menaquinone biosynthesis; menaquinol from 1,4-dihydroxy-2-naphthoate: step 2/2. In terms of biological role, methyltransferase required for the conversion of demethylmenaquinol (DMKH2) to menaquinol (MKH2). The polypeptide is Demethylmenaquinone methyltransferase (Staphylococcus carnosus (strain TM300)).